Consider the following 207-residue polypeptide: MIQKYPSRLLEKAIDQFATLPGVGRKTALRLALYLLRQPVENTRQFAAALVDLREHISYCRRCHNISDSGVCTICADPTRDQSTLCVVENIRDVMAIENTSQYRGLYHVLGGVISPMDGIGPGDLQIDSLVHRVASEQIHEVILALSTTMEGDTTNFFLFRKLESTGVRVSVIARGIAIGDEIEYADEITLGRSILNRTDFSDSVKF.

A C4-type zinc finger spans residues 60–75 (CRRCHNISDSGVCTIC). The 96-residue stretch at 83 to 178 (STLCVVENIR…RVSVIARGIA (96 aa)) folds into the Toprim domain.

The protein belongs to the RecR family.

Functionally, may play a role in DNA repair. It seems to be involved in an RecBC-independent recombinational process of DNA repair. It may act with RecF and RecO. The chain is Recombination protein RecR from Porphyromonas gingivalis (strain ATCC 33277 / DSM 20709 / CIP 103683 / JCM 12257 / NCTC 11834 / 2561).